Consider the following 67-residue polypeptide: Large ribosomal subunit protein bL35 (67 aa).

It belongs to the bacterial ribosomal protein bL35 family.

This is Large ribosomal subunit protein bL35 from Leptospira interrogans serogroup Icterohaemorrhagiae serovar Lai (strain 56601).